A 1039-amino-acid polypeptide reads, in one-letter code: Alpha-mannosidase 2C1 (1039 aa).

The Co(2+) site is built by histidine 259, aspartate 261, aspartate 371, and histidine 576. The active-site Nucleophile is aspartate 371.

It belongs to the glycosyl hydrolase 38 family. The cofactor is Co(2+). As to expression, expressed in kidney and liver (at protein level). Widely expressed, with highest levels in lung, ovary and testis. Also detected at lower levels in heart, brain, liver, spleen, kidney and thymus.

It is found in the cytoplasm. The enzyme catalyses Hydrolysis of terminal, non-reducing alpha-D-mannose residues in alpha-D-mannosides.. With respect to regulation, inhibited by 1,4-dideoxy-1,4-imino-d-mannitol (DIM) and EDTA. Its function is as follows. Cleaves alpha 1,2-, alpha 1,3-, and alpha 1,6-linked mannose residues from glycoproteins. Involved in the degradation of free oligosaccharides in the cytoplasm. This is Alpha-mannosidase 2C1 from Mus musculus (Mouse).